A 231-amino-acid polypeptide reads, in one-letter code: ATP phosphoribosyltransferase (231 aa).

This sequence belongs to the ATP phosphoribosyltransferase family. Short subfamily. In terms of assembly, heteromultimer composed of HisG and HisZ subunits.

Its subcellular location is the cytoplasm. It catalyses the reaction 1-(5-phospho-beta-D-ribosyl)-ATP + diphosphate = 5-phospho-alpha-D-ribose 1-diphosphate + ATP. It participates in amino-acid biosynthesis; L-histidine biosynthesis; L-histidine from 5-phospho-alpha-D-ribose 1-diphosphate: step 1/9. In terms of biological role, catalyzes the condensation of ATP and 5-phosphoribose 1-diphosphate to form N'-(5'-phosphoribosyl)-ATP (PR-ATP). Has a crucial role in the pathway because the rate of histidine biosynthesis seems to be controlled primarily by regulation of HisG enzymatic activity. In Brucella ovis (strain ATCC 25840 / 63/290 / NCTC 10512), this protein is ATP phosphoribosyltransferase.